We begin with the raw amino-acid sequence, 380 residues long: Apelin receptor (380 aa).

The Extracellular segment spans residues 1–30; the sequence is MEEGGDFDNYYGADNQSECEYTDWKSSGAL. N-linked (GlcNAc...) asparagine glycosylation occurs at Asn15. Disulfide bonds link Cys19–Cys281 and Cys102–Cys181. Residues 31 to 54 form a helical membrane-spanning segment; sequence IPAIYMLVFLLGTTGNGLVLWTVF. The Cytoplasmic portion of the chain corresponds to 55-64; sequence RSSREKRRSA. A helical transmembrane segment spans residues 65–86; it reads DIFIASLAVADLTFVVTLPLWA. Residues 87 to 99 lie on the Extracellular side of the membrane; that stretch reads TYTYRDYDWPFGT. The helical transmembrane segment at 100–125 threads the bilayer; it reads FFCKLSSYLIFVNMYASVFCLTGLSF. The Cytoplasmic portion of the chain corresponds to 126 to 146; it reads DRYLAIVRPVANARLRLRVSG. A helical transmembrane segment spans residues 147–164; sequence AVATAVLWVLAALLAMPV. Over 165-198 the chain is Extracellular; it reads MVLRTTGDLENTTKVQCYMDYSMVATVSSEWAWE. A glycan (N-linked (GlcNAc...) asparagine) is linked at Asn175. A helical membrane pass occupies residues 199–223; that stretch reads VGLGVSSTTVGFVVPFTIMLTCYFF. The Cytoplasmic portion of the chain corresponds to 224–246; the sequence is IAQTIAGHFRKERIEGLRKRRRL. Residues 247–270 form a helical membrane-spanning segment; it reads LSIIVVLVVTFALCWMPYHLVKTL. The Extracellular segment spans residues 271 to 289; sequence YMLGSLLHWPCDFDLFLMN. The helical transmembrane segment at 290 to 312 threads the bilayer; that stretch reads IFPYCTCISYVNSCLNPFLYAFF. Topologically, residues 313 to 380 are cytoplasmic; sequence DPRFRQACTS…PYSQETLVVD (68 aa). The segment covering 342 to 351 has biased composition (low complexity); sequence KSASYSSGHS. The tract at residues 342-380 is disordered; the sequence is KSASYSSGHSQGPGPNMGKGGEQMHEKSIPYSQETLVVD. A compositionally biased stretch (polar residues) spans 371 to 380; the sequence is PYSQETLVVD.

Belongs to the G-protein coupled receptor 1 family. Homodimer; dimerization inhibits APLNR-mediated G protein and beta-arrestin signaling pathways compared to monomeric APLNR. As to expression, expressed in heart, brain, kidney, stomach, spleen, thymus, lung, ovary, small intestine and colon, adipose tissues and pancreas. Expressed in glial cells, astrocytes and neuronal subpopulations. Expressed in embryonic (ESCs) and induced (iPSCs) pluripotent stem cells.

It localises to the cell membrane. G protein-coupled receptor for peptide hormones apelin (APLN) and apelin receptor early endogenous ligand (APELA/ELA), that plays a role in the regulation of normal cardiovascular function and fluid homeostasis. When acting as apelin receptor, activates both G(i) protein pathway that inhibits adenylate cyclase activity, and the beta-arrestin pathway that promotes internalization of the receptor. APLNR/APJ also functions as mechanoreceptor that is activated by pathological stimuli in a G-protein-independent fashion to induce beta-arrestin signaling, hence eliciting cardiac hypertrophy. However, the presence of apelin ligand blunts cardiac hypertrophic induction from APLNR/APJ on response to pathological stimuli. Plays a key role in early development such as gastrulation, blood vessels formation and heart morphogenesis by acting as a APELA receptor. May promote angioblast migration toward the embryonic midline, i.e. the position of the future vessel formation, during vasculogenesis. Promotes sinus venosus (SV)-derived endothelial cells migration into the developing heart to promote coronary blood vessel development. Also plays a role in various processes in adults such as regulation of blood vessel formation, blood pressure, heart contractility and heart failure. In terms of biological role, (Microbial infection) Alternative coreceptor with CD4 for HIV-1 infection; may be involved in the development of AIDS dementia. This chain is Apelin receptor, found in Homo sapiens (Human).